The sequence spans 385 residues: SH3 domain-binding protein 5-like (385 aa).

The segment at 1-58 (MAELRQIPGGRETPQGELRPEVVEDEVPRSPVAEEPGGGGSNSSEAKLSPREEEELDP) is disordered. Threonine 13 is modified (phosphothreonine). The segment covering 18 to 28 (LRPEVVEDEVP) has biased composition (basic and acidic residues). A phosphoserine mark is found at serine 30 and serine 49. 2 coiled-coil regions span residues 59–140 (RIQE…YERA) and 169–272 (WQEM…EQIH). Residues 272–328 (HARRRGQPAHTPGQRRSSPVGAEAGPDGGEDADSGIIEGAEGGGLEEGVSLGPGAAP) form a disordered region. The span at 318 to 328 (EGVSLGPGAAP) shows a compositional bias: low complexity. 4 positions are modified to phosphoserine: serine 343, serine 350, serine 358, and serine 362. The segment at 359–385 (DHTSLDGQELGPRSGGRGGRHQRSISL) is disordered. Positions 376-385 (GGRHQRSISL) are enriched in basic residues.

It belongs to the SH3BP5 family.

Functionally, functions as a guanine nucleotide exchange factor (GEF) for RAB11A. In Bos taurus (Bovine), this protein is SH3 domain-binding protein 5-like (SH3BP5L).